The primary structure comprises 89 residues: Small ribosomal subunit protein uS15 (89 aa).

This sequence belongs to the universal ribosomal protein uS15 family. As to quaternary structure, part of the 30S ribosomal subunit. Forms a bridge to the 50S subunit in the 70S ribosome, contacting the 23S rRNA.

Its function is as follows. One of the primary rRNA binding proteins, it binds directly to 16S rRNA where it helps nucleate assembly of the platform of the 30S subunit by binding and bridging several RNA helices of the 16S rRNA. Functionally, forms an intersubunit bridge (bridge B4) with the 23S rRNA of the 50S subunit in the ribosome. In Listeria innocua serovar 6a (strain ATCC BAA-680 / CLIP 11262), this protein is Small ribosomal subunit protein uS15.